Here is a 495-residue protein sequence, read N- to C-terminus: Putative aldehyde dehydrogenase AldA (495 aa).

Residue 212 to 218 (GKGSESG) participates in NAD(+) binding. Residues glutamate 256 and cysteine 290 contribute to the active site.

It belongs to the aldehyde dehydrogenase family.

It catalyses the reaction an aldehyde + NAD(+) + H2O = a carboxylate + NADH + 2 H(+). The chain is Putative aldehyde dehydrogenase AldA (aldA) from Staphylococcus aureus (strain MRSA252).